The sequence spans 412 residues: cAMP-dependent protein kinase regulatory subunit (412 aa).

Over residues 1-11 (MSNYSHSSNNP) the composition is skewed to polar residues. The tract at residues 1–146 (MSNYSHSSNN…TPPSHPKSEE (146 aa)) is disordered. A compositionally biased stretch (basic and acidic residues) spans 16–29 (STKEDKPSSFHKIA). Residues 23–159 (SSFHKIAEDE…RLKTAVSNNF (137 aa)) are dimerization and phosphorylation. 2 stretches are compositionally biased toward polar residues: residues 49–60 (NADNSAGGNNPL) and 119–138 (TSVS…SWTP). S120 is subject to Phosphoserine. 3',5'-cyclic AMP-binding positions include 160–291 (LFSH…EEVP), E238, R247, 292–405 (LLSS…TEYS), E359, and R368.

It belongs to the cAMP-dependent kinase regulatory chain family. In terms of assembly, tetramer, composed of 2 regulatory (R) and 2 catalytic (C) subunits. In the presence of cAMP it dissociates into 2 active monomeric C subunits and an R dimer.

The polypeptide is cAMP-dependent protein kinase regulatory subunit (pkaR) (Emericella nidulans (strain FGSC A4 / ATCC 38163 / CBS 112.46 / NRRL 194 / M139) (Aspergillus nidulans)).